The following is a 504-amino-acid chain: U3 snoRNP-associated protein-like YAO (504 aa).

Residues 1–120 (MKYNNEKKKG…DDDDDEDDDE (120 aa)) are disordered. The span at 20 to 33 (GSNERDPFFEEEPK) shows a compositional bias: basic and acidic residues. 2 stretches are compositionally biased toward acidic residues: residues 41 to 54 (DDDD…DAEE) and 70 to 81 (EVEDEDEFADET). Residues 89–106 (LAEEMLNRRREAMRRERE) are compositionally biased toward basic and acidic residues. The span at 107 to 120 (EADNDDDDDEDDDE) shows a compositional bias: acidic residues. WD repeat units follow at residues 159-198 (KHRR…TDKY), 220-259 (NHSR…HVQA), 262-301 (GHRN…FITE), 304-342 (GHQG…RMIY), 344-382 (APAS…PVFV), 413-452 (SANS…IRPL), and 456-496 (PLTG…QNGV).

It belongs to the WD repeat RRP9 family. In terms of tissue distribution, expressed in tissues with active in cell division such as shoot apexes, root tips, lateral root primordia, embryos, endosperm, pollen grains and embryo sacs.

Its subcellular location is the nucleus. It localises to the nucleolus. In terms of biological role, component of a nucleolar small nuclear ribonucleoprotein particle (snoRNP) thought to participate in the processing and modification of pre-ribosomal RNA. Essential for embryogenesis. Plays a critical role in embryo sac development and gametic cell fate. Required for the correct positioning of the first division plane of zygote. May function during early embryogenesis. This Arabidopsis thaliana (Mouse-ear cress) protein is U3 snoRNP-associated protein-like YAO.